The chain runs to 94 residues: Transcription factor PRE6 (94 aa).

Positions 1-20 are disordered; sequence MSSRRSSRSRQSGSSRISDD. In terms of domain architecture, bHLH spans 6–60; that stretch reads SSRSRQSGSSRISDDQISDLVSKLQHLIPELRRRRSDKVSASKVLQETCNYIRNL.

This sequence belongs to the bHLH protein family. As to quaternary structure, interacts with HFR1.

It is found in the cytoplasm. It localises to the nucleus. Functionally, atypical and probable non DNA-binding bHLH transcription factor that regulates light-mediated responses in day light conditions by binding and inhibiting the activity of the bHLH transcription factor HFR1, a critical regulator of light signaling and shade avoidance. Forms non-functional heterodimers with HFR1, causing liberation and activation of PIF4 from the transcriptionally inactive HFR1-PIF4 complex. This is Transcription factor PRE6 (PRE6) from Arabidopsis thaliana (Mouse-ear cress).